The following is a 170-amino-acid chain: MAFIGVAILINGGKNNEGIDNISLFGCLLVLSAGIIFAAVLRWTQRVVAKVSTQAYTSVSIVLGTITTLPFTLLLTENWQISLNSTGIAGLLYLAIGCSWLAYWLWNKGLNSVDANISGVLVALEPLFGILFAVSLLGETLSFSAALGITIIMLATLGSTLLPKLLKKSV.

5 helical membrane-spanning segments follow: residues 21–41 (NISL…AAVL), 55–75 (AYTS…TLLL), 86–106 (TGIA…YWLW), 117–137 (ISGV…VSLL), and 143–163 (FSAA…TLLP). Residues 35 to 161 (IIFAAVLRWT…IMLATLGSTL (127 aa)) enclose the EamA domain.

This sequence belongs to the EamA transporter family.

It localises to the cell membrane. This is an uncharacterized protein from Haemophilus influenzae (strain ATCC 51907 / DSM 11121 / KW20 / Rd).